The primary structure comprises 369 residues: WAT1-related protein At3g53210 (369 aa).

Transmembrane regions (helical) follow at residues Ile12–Ala31, Leu39–Phe59, Phe72–Ile92, Ala103–Ile123, Gly133–Tyr153, Trp182–Leu202, Phe214–Tyr234, Ala252–Val272, Leu278–Ala298, and Phe303–Met323. 2 consecutive EamA domains span residues Asn24 to Ile150 and Leu194 to Met323. Residues Gly348–Ser369 form a disordered region.

The protein belongs to the drug/metabolite transporter (DMT) superfamily. Plant drug/metabolite exporter (P-DME) (TC 2.A.7.4) family.

The protein resides in the membrane. This chain is WAT1-related protein At3g53210, found in Arabidopsis thaliana (Mouse-ear cress).